The following is a 247-amino-acid chain: OCIA domain-containing protein 1 (247 aa).

The 112-residue stretch at 1–112 folds into the OCIA domain; that stretch reads MNGRADFREP…KKLENSPLGE (112 aa). Phosphoserine occurs at positions 108 and 116. Positions 116–247 are disordered; that stretch reads SGELRRSLPP…VNKYGDTWDE (132 aa). Polar residues-rich tracts occupy residues 136–146 and 168–177; these read SNVSGQSSFGT and ASMNESTPTG. Basic and acidic residues-rich tracts occupy residues 192 to 210 and 218 to 240; these read DSPKRKSVTYEELRNKNRE and HKTDPSVRPMQERGPQKEVKVNK. A phosphoserine mark is found at Ser193 and Ser198.

It belongs to the OCIAD1 family. As to quaternary structure, interacts with OCIAD2. Interacts with STAT3.

Its subcellular location is the endosome. Functionally, maintains stem cell potency. Increases STAT3 phosphorylation and controls ERK phosphorylation. May act as a scaffold, increasing STAT3 recruitment onto endosomes. The sequence is that of OCIA domain-containing protein 1 from Rattus norvegicus (Rat).